A 379-amino-acid chain; its full sequence is Protein OSCP1 (379 aa).

Predominantly expressed in testis.

It is found in the basal cell membrane. Its function is as follows. May be involved in drug clearance in the placenta. The polypeptide is Protein OSCP1 (Oscp1) (Rattus norvegicus (Rat)).